Here is a 164-residue protein sequence, read N- to C-terminus: Crossover junction endodeoxyribonuclease RuvC (164 aa).

Catalysis depends on residues Asp-7, Glu-67, and Asp-140. The Mg(2+) site is built by Asp-7, Glu-67, and Asp-140.

Belongs to the RuvC family. Homodimer which binds Holliday junction (HJ) DNA. The HJ becomes 2-fold symmetrical on binding to RuvC with unstacked arms; it has a different conformation from HJ DNA in complex with RuvA. In the full resolvosome a probable DNA-RuvA(4)-RuvB(12)-RuvC(2) complex forms which resolves the HJ. It depends on Mg(2+) as a cofactor.

The protein resides in the cytoplasm. The catalysed reaction is Endonucleolytic cleavage at a junction such as a reciprocal single-stranded crossover between two homologous DNA duplexes (Holliday junction).. Functionally, the RuvA-RuvB-RuvC complex processes Holliday junction (HJ) DNA during genetic recombination and DNA repair. Endonuclease that resolves HJ intermediates. Cleaves cruciform DNA by making single-stranded nicks across the HJ at symmetrical positions within the homologous arms, yielding a 5'-phosphate and a 3'-hydroxyl group; requires a central core of homology in the junction. The consensus cleavage sequence is 5'-(A/T)TT(C/G)-3'. Cleavage occurs on the 3'-side of the TT dinucleotide at the point of strand exchange. HJ branch migration catalyzed by RuvA-RuvB allows RuvC to scan DNA until it finds its consensus sequence, where it cleaves and resolves the cruciform DNA. This chain is Crossover junction endodeoxyribonuclease RuvC, found in Pelotomaculum thermopropionicum (strain DSM 13744 / JCM 10971 / SI).